We begin with the raw amino-acid sequence, 854 residues long: Probable inactive serine/threonine-protein kinase DDB_G0274821 (854 aa).

The region spanning 1–266 (MPIKESFKRI…WPKLFIHPFF (266 aa)) is the Protein kinase domain. N-linked (GlcNAc...) asparagine glycosylation is found at N32 and N106. Residues 116–135 (NNNNNNNNNNNNNNNNNNNN) form a disordered region. 4 N-linked (GlcNAc...) asparagine glycosylation sites follow: N163, N279, N283, and N290. Residues 289-331 (LNKSSSSSSSSSSSSSSSSSSSSSSSLSFQQQQQPNNISSPNL) form a disordered region. Positions 292-322 (SSSSSSSSSSSSSSSSSSSSSSSLSFQQQQQ) are enriched in low complexity. N325, N347, and N365 each carry an N-linked (GlcNAc...) asparagine glycan. The interval 384 to 408 (IISPNRPSSPPLSSLSSCSSSSSSS) is disordered. The N-linked (GlcNAc...) asparagine glycan is linked to N414. Residues 425–446 (NNNNNNNNNNNNNNNNNNNNNN) form a disordered region. 3 N-linked (GlcNAc...) asparagine glycosylation sites follow: N520, N541, and N620. Residues 627 to 650 (SSPPPSSSSSSSSPSSPSSTSPSL) form a disordered region. The segment covering 633 to 650 (SSSSSSSPSSPSSTSPSL) has biased composition (low complexity). N-linked (GlcNAc...) asparagine glycosylation occurs at N757. Residues 770-792 (HWRVQISFLNILFILITINNNFI) traverse the membrane as a helical segment.

Belongs to the protein kinase superfamily. Ser/Thr protein kinase family.

It localises to the membrane. This Dictyostelium discoideum (Social amoeba) protein is Probable inactive serine/threonine-protein kinase DDB_G0274821.